Reading from the N-terminus, the 249-residue chain is UPF0246 protein Lreu_0493 (249 aa).

Belongs to the UPF0246 family.

In Limosilactobacillus reuteri (strain DSM 20016) (Lactobacillus reuteri), this protein is UPF0246 protein Lreu_0493.